A 353-amino-acid polypeptide reads, in one-letter code: Peptide-N(4)-(N-acetyl-beta-glucosaminyl)asparagine amidase (353 aa).

Residues Cys125, Cys128, and Cys159 each contribute to the Zn(2+) site. Cys185 serves as the catalytic Nucleophile. Active-site residues include His212 and Asp229. Glu232 is a substrate binding site. Residues 316–353 form a disordered region; sequence SLEKTKPSKDTSTTTLTGTKGRESGSTAWKQQRGEDGS. Residues 325-334 show a composition bias toward low complexity; it reads DTSTTTLTGT.

It belongs to the transglutaminase-like superfamily. PNGase family. It depends on Zn(2+) as a cofactor.

It localises to the cytoplasm. It catalyses the reaction Hydrolysis of an N(4)-(acetyl-beta-D-glucosaminyl)asparagine residue in which the glucosamine residue may be further glycosylated, to yield a (substituted) N-acetyl-beta-D-glucosaminylamine and a peptide containing an aspartate residue.. Functionally, specifically deglycosylates the denatured form of N-linked glycoproteins in the cytoplasm and assists their proteasome-mediated degradation. Cleaves the beta-aspartyl-glucosamine (GlcNAc) of the glycan and the amide side chain of Asn, converting Asn to Asp. Prefers proteins containing high-mannose over those bearing complex type oligosaccharides. Can recognize misfolded proteins in the endoplasmic reticulum that are exported to the cytosol to be destroyed and deglycosylate them, while it has no activity toward native proteins. Deglycosylation is a prerequisite for subsequent proteasome-mediated degradation of some, but not all, misfolded glycoproteins. This chain is Peptide-N(4)-(N-acetyl-beta-glucosaminyl)asparagine amidase (PNG1), found in Kluyveromyces lactis (strain ATCC 8585 / CBS 2359 / DSM 70799 / NBRC 1267 / NRRL Y-1140 / WM37) (Yeast).